Consider the following 481-residue polypeptide: Alginate biosynthesis protein AlgA (481 aa).

It belongs to the mannose-6-phosphate isomerase type 2 family. As to quaternary structure, monomer. Co(2+) is required as a cofactor.

The enzyme catalyses D-mannose 6-phosphate = D-fructose 6-phosphate. The catalysed reaction is alpha-D-mannose 1-phosphate + GTP + H(+) = GDP-alpha-D-mannose + diphosphate. The protein operates within nucleotide-sugar biosynthesis; GDP-alpha-D-mannose biosynthesis; GDP-alpha-D-mannose from alpha-D-mannose 1-phosphate (GTP route): step 1/1. It functions in the pathway nucleotide-sugar biosynthesis; GDP-alpha-D-mannose biosynthesis; alpha-D-mannose 1-phosphate from D-fructose 6-phosphate: step 1/2. In terms of biological role, produces a precursor for alginate polymerization. The alginate layer provides a protective barrier against host immune defenses and antibiotics. This chain is Alginate biosynthesis protein AlgA (algA), found in Pseudomonas aeruginosa (strain ATCC 15692 / DSM 22644 / CIP 104116 / JCM 14847 / LMG 12228 / 1C / PRS 101 / PAO1).